The chain runs to 406 residues: Cysteine desulfurase (406 aa).

Lys226 is modified (N6-(pyridoxal phosphate)lysine). The active-site Cysteine persulfide intermediate is the Cys364.

This sequence belongs to the class-V pyridoxal-phosphate-dependent aminotransferase family. Csd subfamily. As to quaternary structure, homodimer. Interacts with SufE and the SufBCD complex composed of SufB, SufC and SufD. The interaction with SufE is required to mediate the direct transfer of the sulfur atom from the S-sulfanylcysteine. Pyridoxal 5'-phosphate is required as a cofactor.

It localises to the cytoplasm. The catalysed reaction is (sulfur carrier)-H + L-cysteine = (sulfur carrier)-SH + L-alanine. The enzyme catalyses L-selenocysteine + AH2 = hydrogenselenide + L-alanine + A + H(+). It participates in cofactor biosynthesis; iron-sulfur cluster biosynthesis. In terms of biological role, cysteine desulfurases mobilize the sulfur from L-cysteine to yield L-alanine, an essential step in sulfur metabolism for biosynthesis of a variety of sulfur-containing biomolecules. Component of the suf operon, which is activated and required under specific conditions such as oxidative stress and iron limitation. Acts as a potent selenocysteine lyase in vitro, that mobilizes selenium from L-selenocysteine. Selenocysteine lyase activity is however unsure in vivo. This Escherichia coli O45:K1 (strain S88 / ExPEC) protein is Cysteine desulfurase.